The following is a 674-amino-acid chain: Probable copper-transporting P-type ATPase B (674 aa).

Residues 1 to 22 (MNHSNQMHHDNHESHNHHSGHA) are disordered. Positions 7–16 (MHHDNHESHN) are enriched in basic and acidic residues. The next 6 helical transmembrane spans lie at 32–52 (FFVSLIFAIPIILLSPLMGIN), 57–77 (FTFPGSEWVVLILSTILFFYG), 95–115 (GMMTLVALGISVAYIYSLYAF), 127–147 (TMDFFWELATLILIMLLGHWI), 284–304 (GYLFYFAVIVGVISFIVWMLI), and 315–335 (LVTVLVIACPHALGLAIPLVT). D367 acts as the 4-aspartylphosphate intermediate in catalysis. Positions 565 and 569 each coordinate Mg(2+). A run of 2 helical transmembrane segments spans residues 623 to 645 (LWWGAGYNIVAVPLAAGALAFVG) and 649 to 671 (SPAVGAILMSLSTVIVAINAFTL).

This sequence belongs to the cation transport ATPase (P-type) (TC 3.A.3) family. Type IB subfamily.

The protein localises to the cell membrane. It carries out the reaction Cu(+)(in) + ATP + H2O = Cu(+)(out) + ADP + phosphate + H(+). In terms of biological role, involved in copper transport. The chain is Probable copper-transporting P-type ATPase B (copB) from Staphylococcus epidermidis (strain ATCC 12228 / FDA PCI 1200).